The sequence spans 358 residues: Short chain dehydrogenase sor7 (358 aa).

Residues 1-22 are disordered; that stretch reads MSSPAIGQPPIPPTPTDANISG. Leucine 34, aspartate 88, asparagine 115, tyrosine 206, lysine 210, valine 238, and threonine 240 together coordinate NADP(+). Tyrosine 206 acts as the Proton donor in catalysis. The active-site Lowers pKa of active site Tyr is lysine 210.

This sequence belongs to the short-chain dehydrogenases/reductases (SDR) family.

Its pathway is secondary metabolite biosynthesis. Its function is as follows. Short chain dehydrogenase; part of the SOR gene cluster that mediates the biosynthesis of sorbicillinoids, a diverse group of yellow secondary metabolites that restrict growth of competing pathogenic fungi but not of bacteria. Sorbicillinoids biosynthesis requires the action of two PKSs. The SOR cluster is required for the production of trichodimerol and dihydrotrichotetronin, with sor2 being sufficient for production of trichodimerol, but not dihydrotrichotetronin in the light. Sor1 iteratively combines three acetyl units and the growing chain is modified by the ketoacyl reductase subunit, and optional by the enoyl reductase subunit in the second cycle. The polyketide is then handed over to the PKS sor2, which adds three more acetyl units, and two methyl groups. Sor2 releases an aldehyde, which undergoes spontaneous cyclization resulting in the formation of sorbicillin or 2',3'-dihydrosorbicillin. The monooxygenase sor5 oxidizes sorbicillin and 2',3'-dihydrosorbicillin to 2',3'-dihydrosorbicillinol and sorbicillinol, respectively. The oxidoreductase sor8 further converts sorbicillinol into oxosorbicillinol. Sorbicillinol is the building block for the other sorbicillinoids such as disorbicillinol, bisvertinolon, dihydrobisvertinolone, and dihydrotrichotetronine. This Hypocrea jecorina (strain QM6a) (Trichoderma reesei) protein is Short chain dehydrogenase sor7.